The primary structure comprises 102 residues: Sulfur globule protein CV3 (102 aa).

The signal sequence occupies residues 1-25; sequence MTMKRLLLVSTLAGASALATLPANA.

As to quaternary structure, the protein envelope of the sulfur globules is composed of the three different proteins CV1, CV2 and CV3.

Structural protein of the sulfur globules, which are intracellular globules that serve for sulfur storage in purple sulfur bacteria. The polypeptide is Sulfur globule protein CV3 (sgpC) (Allochromatium vinosum (strain ATCC 17899 / DSM 180 / NBRC 103801 / NCIMB 10441 / D) (Chromatium vinosum)).